Reading from the N-terminus, the 387-residue chain is Phosphoglycerate kinase (387 aa).

Substrate-binding positions include 21–23 (DLN), Arg36, 59–62 (HLGR), Arg113, and Arg146. Residues Lys197, Glu314, and 340-343 (GGDT) each bind ATP.

The protein belongs to the phosphoglycerate kinase family. Monomer.

The protein resides in the cytoplasm. The enzyme catalyses (2R)-3-phosphoglycerate + ATP = (2R)-3-phospho-glyceroyl phosphate + ADP. Its pathway is carbohydrate degradation; glycolysis; pyruvate from D-glyceraldehyde 3-phosphate: step 2/5. This chain is Phosphoglycerate kinase, found in Photorhabdus luminescens (Xenorhabdus luminescens).